The primary structure comprises 226 residues: Probable chemoreceptor glutamine deamidase CheD (226 aa).

This sequence belongs to the CheD family.

The catalysed reaction is L-glutaminyl-[protein] + H2O = L-glutamyl-[protein] + NH4(+). Its function is as follows. Probably deamidates glutamine residues to glutamate on methyl-accepting chemotaxis receptors (MCPs), playing an important role in chemotaxis. This is Probable chemoreceptor glutamine deamidase CheD from Bordetella avium (strain 197N).